The primary structure comprises 132 residues: Small ribosomal subunit protein eS17B (132 aa).

A Phosphoserine modification is found at Ser43.

This sequence belongs to the eukaryotic ribosomal protein eS17 family. As to quaternary structure, component of the small ribosomal subunit (SSU). Mature yeast ribosomes consist of a small (40S) and a large (60S) subunit. The 40S small subunit contains 1 molecule of ribosomal RNA (18S rRNA) and at least 33 different proteins. The large 60S subunit contains 3 rRNA molecules (25S, 5.8S and 5S rRNA) and at least 46 different proteins.

The protein localises to the cytoplasm. Its function is as follows. Component of the ribosome, a large ribonucleoprotein complex responsible for the synthesis of proteins in the cell. The small ribosomal subunit (SSU) binds messenger RNAs (mRNAs) and translates the encoded message by selecting cognate aminoacyl-transfer RNA (tRNA) molecules. The large subunit (LSU) contains the ribosomal catalytic site termed the peptidyl transferase center (PTC), which catalyzes the formation of peptide bonds, thereby polymerizing the amino acids delivered by tRNAs into a polypeptide chain. The nascent polypeptides leave the ribosome through a tunnel in the LSU and interact with protein factors that function in enzymatic processing, targeting, and the membrane insertion of nascent chains at the exit of the ribosomal tunnel. This Schizosaccharomyces pombe (strain 972 / ATCC 24843) (Fission yeast) protein is Small ribosomal subunit protein eS17B (rps1702).